A 455-amino-acid chain; its full sequence is EP1-like glycoprotein 1 (455 aa).

The signal sequence occupies residues 1 to 22; that stretch reads MLRFDYLLITALAISTVSVVMA. In terms of domain architecture, Bulb-type lectin spans 43–163; it reads TEYDASYRFL…HGKFVWQSFD (121 aa). 5 N-linked (GlcNAc...) asparagine glycosylation sites follow: asparagine 106, asparagine 191, asparagine 211, asparagine 241, and asparagine 289. Position 374 is an S-nitrosocysteine (cysteine 374). The PAN domain maps to 374–455; that stretch reads CSGGKGKAVN…NTSSVAYIKY (82 aa). 2 cysteine pairs are disulfide-bonded: cysteine 410-cysteine 432 and cysteine 414-cysteine 420. Residue asparagine 446 is glycosylated (N-linked (GlcNAc...) asparagine).

The protein localises to the secreted. It localises to the cell wall. This is EP1-like glycoprotein 1 from Arabidopsis thaliana (Mouse-ear cress).